Reading from the N-terminus, the 153-residue chain is Endoribonuclease YbeY (153 aa).

Positions 118, 122, and 128 each coordinate Zn(2+).

Belongs to the endoribonuclease YbeY family. Zn(2+) serves as cofactor.

Its subcellular location is the cytoplasm. Its function is as follows. Single strand-specific metallo-endoribonuclease involved in late-stage 70S ribosome quality control and in maturation of the 3' terminus of the 16S rRNA. This is Endoribonuclease YbeY from Oenococcus oeni (strain ATCC BAA-331 / PSU-1).